Here is a 144-residue protein sequence, read N- to C-terminus: Large ribosomal subunit protein uL15 (144 aa).

Residues 1–59 form a disordered region; sequence MELNNLKPAEGAKHAKRRVGRGIGSGLGKTAGRGHKGQKSRSGGFHKVGFEGGQMPLQR. The span at 21 to 31 shows a compositional bias: gly residues; that stretch reads RGIGSGLGKTA.

The protein belongs to the universal ribosomal protein uL15 family. In terms of assembly, part of the 50S ribosomal subunit.

Its function is as follows. Binds to the 23S rRNA. In Burkholderia thailandensis (strain ATCC 700388 / DSM 13276 / CCUG 48851 / CIP 106301 / E264), this protein is Large ribosomal subunit protein uL15.